A 738-amino-acid chain; its full sequence is Outer membrane protein assembly factor BamA (738 aa).

Positions 1 to 13 (MVWLLFLSSFCFA) are cleaved as a signal peptide. 5 consecutive POTRA domains span residues 14–81 (DEVV…LQEN), 82–159 (PILR…VKEA), 162–248 (TVIR…LKEG), 251–329 (YSFG…VVST), and 332–404 (YRIR…VKER).

The protein belongs to the BamA family. In terms of assembly, part of the Bam complex.

It is found in the cell outer membrane. In terms of biological role, part of the outer membrane protein assembly complex, which is involved in assembly and insertion of beta-barrel proteins into the outer membrane. In Neorickettsia risticii (strain Illinois), this protein is Outer membrane protein assembly factor BamA.